The chain runs to 266 residues: MRPLARLRGRRVVPQRSAGELDAMAAAGAVVAAALRAIRAAAAPGTSSLSLDEIAESVIRESGATPSFLGYHGYPASICASINDRVVHGIPSTAEVLAPGDLVSIDCGAVLDGWHGDAAITFGVGALSDADEALSEATRESLQAGIAAMVVGNRLTDVAHAIETGTRAAELRYGRSFGIVAGYGGHGIGRQMHMDPFLPNEGAPGRGPLLAAGSVLAIEPMLTLGTTKTVVLDDKWTVTTADGSRAAHWEHTVAVTDDGPRILTLG.

A substrate-binding site is contributed by H88. D106, D117, and H186 together coordinate a divalent metal cation. Residue H193 participates in substrate binding. A divalent metal cation-binding residues include E219 and E250.

Belongs to the peptidase M24A family. Methionine aminopeptidase type 1 subfamily. Monomer. It depends on Co(2+) as a cofactor. Zn(2+) is required as a cofactor. The cofactor is Mn(2+). Fe(2+) serves as cofactor.

The catalysed reaction is Release of N-terminal amino acids, preferentially methionine, from peptides and arylamides.. Removes the N-terminal methionine from nascent proteins. The N-terminal methionine is often cleaved when the second residue in the primary sequence is small and uncharged (Met-Ala-, Cys, Gly, Pro, Ser, Thr, or Val). Requires deformylation of the N(alpha)-formylated initiator methionine before it can be hydrolyzed. This chain is Methionine aminopeptidase 1, found in Mycobacterium tuberculosis (strain CDC 1551 / Oshkosh).